Consider the following 53-residue polypeptide: MNQGKIWTVVNPAVGLPLLLGSVAITALLVHLAVLTHTTWFPAFTQGGLKKAA.

The Cytoplasmic segment spans residues 1-14; that stretch reads MNQGKIWTVVNPAV. A helical transmembrane segment spans residues 15–35; it reads GLPLLLGSVAITALLVHLAVL. A bacteriochlorophyll is bound at residue H31. The Periplasmic portion of the chain corresponds to 36–53; it reads THTTWFPAFTQGGLKKAA.

Belongs to the antenna complex alpha subunit family. As to quaternary structure, the core complex is formed by different alpha and beta chains, binding bacteriochlorophyll molecules, and arranged most probably in tetrameric structures disposed around the reaction center. The non-pigmented gamma chains may constitute additional components.

The protein resides in the cell inner membrane. In terms of biological role, antenna complexes are light-harvesting systems, which transfer the excitation energy to the reaction centers. This is Light-harvesting protein B-800/820 alpha chain from Rhodoblastus acidophilus (Rhodopseudomonas acidophila).